The primary structure comprises 104 residues: MGVEGMWNVFLFSLQVAALPSIKCSINGSGFSSTKGRQYREAWGAISPSDSMELIRLSEIASGKHAHKALKRLLALESLPPQSTRVFSSPRSHRRMALAATFPS.

The first 18 residues, 1–18 (MGVEGMWNVFLFSLQVAA), serve as a signal peptide directing secretion. Asn-27 is a glycosylation site (N-linked (GlcNAc...) asparagine; by host).

This is an uncharacterized protein from Fowl adenovirus A serotype 1 (strain CELO / Phelps) (FAdV-1).